A 501-amino-acid polypeptide reads, in one-letter code: Lysine--tRNA ligase (501 aa).

Residues Glu402 and Glu409 each contribute to the Mg(2+) site.

This sequence belongs to the class-II aminoacyl-tRNA synthetase family. As to quaternary structure, homodimer. Requires Mg(2+) as cofactor.

The protein localises to the cytoplasm. The catalysed reaction is tRNA(Lys) + L-lysine + ATP = L-lysyl-tRNA(Lys) + AMP + diphosphate. This is Lysine--tRNA ligase (lysS) from Helicobacter pylori (strain J99 / ATCC 700824) (Campylobacter pylori J99).